The chain runs to 475 residues: Cytosolic non-specific dipeptidase (475 aa).

Position 2 is an N-acetylalanine (alanine 2). Lysine 9 carries the post-translational modification N6-acetyllysine. Serine 58 is modified (phosphoserine). Histidine 99 provides a ligand contact to Mn(2+). Residue aspartate 101 is part of the active site. Aspartate 132 contacts Mn(2+). Glutamate 166 acts as the Proton acceptor in catalysis. Residues 166–167, aspartate 195, and histidine 228 each bind substrate; that span reads EE. The Mn(2+) site is built by glutamate 167 and aspartate 195. Serine 299 carries the post-translational modification Phosphoserine. Residues threonine 330, arginine 343, serine 417, and histidine 445 each coordinate substrate. Position 445 (histidine 445) interacts with Mn(2+).

It belongs to the peptidase M20A family. In terms of assembly, homodimer. Requires Mn(2+) as cofactor.

Its subcellular location is the cytoplasm. The catalysed reaction is Hydrolysis of dipeptides, preferentially hydrophobic dipeptides including prolyl amino acids.. It carries out the reaction L-threonyl-L-threonine + H2O = 2 L-threonine. The enzyme catalyses L-threonyl-L-serine + H2O = L-threonine + L-serine. It catalyses the reaction L-seryl-L-threonine + H2O = L-threonine + L-serine. The catalysed reaction is L-cysteinylglycine + H2O = L-cysteine + glycine. It carries out the reaction (S)-lactate + L-phenylalanine = N-[(S)-lactoyl]-L-phenylalanine + H2O. In terms of biological role, catalyzes the peptide bond hydrolysis in dipeptides, displaying a non-redundant activity toward threonyl dipeptides. Mediates threonyl dipeptide catabolism in a tissue-specific way. Has high dipeptidase activity toward cysteinylglycine, an intermediate metabolite in glutathione metabolism. Metabolizes N-lactoyl-amino acids, both through hydrolysis to form lactic acid and amino acids, as well as through their formation by reverse proteolysis. Plays a role in the regulation of cell cycle arrest and apoptosis. The chain is Cytosolic non-specific dipeptidase (CNDP2) from Pongo abelii (Sumatran orangutan).